The following is a 416-amino-acid chain: Tiggy-winkle hedgehog protein (416 aa).

An N-terminal signal peptide occupies residues 1 to 26 (MDVRLHLKQFALLCFISLLLTPCGLA). Cys-27 is lipidated: N-palmitoyl cysteine. Glu-92, Glu-93, Asp-98, Thr-128, Glu-129, Asp-132, and Asp-134 together coordinate Ca(2+). Residues His-143, Asp-150, and His-185 each coordinate Zn(2+). Gly-200 carries the Cholesterol glycine ester lipid modification.

Belongs to the hedgehog family. In terms of assembly, multimer. As to quaternary structure, interacts with HHATL/GUP1 which negatively regulates HHAT-mediated palmitoylation of the TWHH N-terminus. Interacts with BOC and CDON. Interacts with HHIP. Interacts with DISP1 via its cholesterol anchor. Interacts with SCUBE2. The C-terminal domain displays an autoproteolysis activity and a cholesterol transferase activity. Both activities result in the cleavage of the full-length protein into two parts (N-product and C-product) followed by the covalent attachment of a cholesterol moiety to the C-terminal of the newly generated N-product. Cholesterylation is required for the tiggy-winkle hedgehog protein N-product targeting to lipid rafts and multimerization. N-product is the active species in both local and long-range signaling, whereas the C-product is degraded in the endoplasmic reticulum. In terms of processing, N-palmitoylation by HHAT of N-product is required for tiggy-winkle hedgehog protein N-product multimerization and full activity. It is a prerequisite for the membrane-proximal positioning and the subsequent shedding of this N-terminal peptide. Post-translationally, the lipidated N- and C-terminal peptides of N-product can be cleaved (shedding). The N-terminal palmitoylated peptide is cleaved at the Cardin-Weintraub (CW) motif site. The cleavage reduced the interactions with heparan sulfate. The cleavage is enhanced by SCUBE2. Expressed in the ventral midline of the neural tube and brain. In the developing brain, expression occurs in domains that include a discrete region in the floor of the diencephalon. Not detected in the notochord or developing fin bud.

The protein localises to the cell membrane. It is found in the endoplasmic reticulum membrane. The protein resides in the golgi apparatus membrane. Functionally, the C-terminal part of the tiggy-winkle hedgehog protein precursor displays an autoproteolysis and a cholesterol transferase activity. Both activities result in the cleavage of the full-length protein into two parts (N-product and C-product) followed by the covalent attachment of a cholesterol moiety to the C-terminal of the newly generated N-product. Both activities occur in the endoplasmic reticulum. Once cleaved, the C-product is degraded in the endoplasmic reticulum. Its function is as follows. The dually lipidated tiggy-winkle hedgehog protein N-product is a morphogen which is essential for a variety of patterning events during development. Involved in dorso-ventral patterning of the brain and in early patterning of the developing eyes. Binds to the patched (PTCH1) receptor, which functions in association with smoothened (SMO), to activate the transcription of target genes. This chain is Tiggy-winkle hedgehog protein (shhb), found in Danio rerio (Zebrafish).